Here is a 340-residue protein sequence, read N- to C-terminus: tRNA N6-adenosine threonylcarbamoyltransferase (340 aa).

The Fe cation site is built by H111 and H115. Residues 134 to 138, D167, G180, and N276 each bind substrate; that span reads LVSGG. D304 serves as a coordination point for Fe cation.

This sequence belongs to the KAE1 / TsaD family. Fe(2+) is required as a cofactor.

It localises to the cytoplasm. The enzyme catalyses L-threonylcarbamoyladenylate + adenosine(37) in tRNA = N(6)-L-threonylcarbamoyladenosine(37) in tRNA + AMP + H(+). Required for the formation of a threonylcarbamoyl group on adenosine at position 37 (t(6)A37) in tRNAs that read codons beginning with adenine. Is involved in the transfer of the threonylcarbamoyl moiety of threonylcarbamoyl-AMP (TC-AMP) to the N6 group of A37, together with TsaE and TsaB. TsaD likely plays a direct catalytic role in this reaction. This chain is tRNA N6-adenosine threonylcarbamoyltransferase, found in Helicobacter pylori (strain ATCC 700392 / 26695) (Campylobacter pylori).